Here is a 412-residue protein sequence, read N- to C-terminus: Tyrosine--tRNA ligase (412 aa).

Tyr-38 is a binding site for L-tyrosine. The 'HIGH' region motif lies at 43 to 52 (CTANSLHIGS). The L-tyrosine site is built by Tyr-170 and Gln-174. The short motif at 230–234 (KMGKT) is the 'KMSKS' region element. Lys-233 contributes to the ATP binding site. In terms of domain architecture, S4 RNA-binding spans 343–409 (IPISKLLHMW…CGKKRRLKVV (67 aa)).

Belongs to the class-I aminoacyl-tRNA synthetase family. TyrS type 1 subfamily. In terms of assembly, homodimer.

It is found in the cytoplasm. It carries out the reaction tRNA(Tyr) + L-tyrosine + ATP = L-tyrosyl-tRNA(Tyr) + AMP + diphosphate + H(+). Its function is as follows. Catalyzes the attachment of tyrosine to tRNA(Tyr) in a two-step reaction: tyrosine is first activated by ATP to form Tyr-AMP and then transferred to the acceptor end of tRNA(Tyr). This Anaplasma phagocytophilum (strain HZ) protein is Tyrosine--tRNA ligase.